Consider the following 309-residue polypeptide: Phytoene synthase (309 aa).

This sequence belongs to the phytoene/squalene synthase family.

The catalysed reaction is 2 (2E,6E,10E)-geranylgeranyl diphosphate = 15-cis-phytoene + 2 diphosphate. It participates in carotenoid biosynthesis; phytoene biosynthesis; all-trans-phytoene from geranylgeranyl diphosphate: step 1/1. Catalyzes the reaction from prephytoene diphosphate to phytoene. This is Phytoene synthase (crtB) from Arthrospira platensis (Spirulina platensis).